A 770-amino-acid chain; its full sequence is Probable methyltransferase PMT25 (770 aa).

Topologically, residues 1-17 (MAMGKYSRVDGKKSSSY) are cytoplasmic. Residues 18-38 (GLTITIVLLLSLCLVGTWMFM) form a helical; Signal-anchor for type II membrane protein membrane-spanning segment. Residues 39-770 (SSWSAPADSA…ETETIKSAIA (732 aa)) are Lumenal-facing. Positions 44–238 (PADSAGYSST…SSISKDQSSY (195 aa)) are disordered. Residues 55–79 (TAKDVSKNDLRKEEGDRDPKNFSDE) are compositionally biased toward basic and acidic residues. 2 N-linked (GlcNAc...) asparagine glycosylation sites follow: Asn75 and Asn107. A compositionally biased stretch (polar residues) spans 92–109 (QVKTDSENSAEGNQVNES). 2 stretches are compositionally biased toward basic and acidic residues: residues 110–124 (SGEK…KESD) and 131–177 (DGEK…KAEE). N-linked (GlcNAc...) asparagine glycans are attached at residues Asn163 and Asn178. Polar residues-rich tracts occupy residues 205 to 220 (ESST…LVES) and 227 to 238 (QQSSISKDQSSY). 2 N-linked (GlcNAc...) asparagine glycosylation sites follow: Asn244 and Asn363.

The protein belongs to the methyltransferase superfamily.

It is found in the golgi apparatus membrane. The sequence is that of Probable methyltransferase PMT25 from Arabidopsis thaliana (Mouse-ear cress).